Consider the following 238-residue polypeptide: Accessory gene regulator A (238 aa).

A Response regulatory domain is found at 2 to 125 (KIFICEDDPK…LRTRIIDCLE (124 aa)). Asp59 carries the post-translational modification 4-aspartylphosphate. Positions 143 to 238 (IELKRGSNSV…YASVRNVKKI (96 aa)) constitute an HTH LytTR-type domain.

The protein localises to the cytoplasm. Functionally, required for high-level post-exponential phase expression of a series of secreted proteins. In Staphylococcus aureus (strain COL), this protein is Accessory gene regulator A (agrA).